The sequence spans 345 residues: uncharacterized protein (345 aa).

2 disordered regions span residues 1–24 and 296–345; these read MGLE…ENRK and MTAH…LNES. A compositionally biased stretch (acidic residues) spans 304 to 323; that stretch reads SDYDNDDDTDGIINETDYEL. The segment covering 324–345 has biased composition (polar residues); sequence DTSQSEFATLTTSSNKSILNES.

This is an uncharacterized protein from Schizosaccharomyces pombe (strain 972 / ATCC 24843) (Fission yeast).